The primary structure comprises 121 residues: uncharacterized protein (121 aa).

3 consecutive transmembrane segments (helical) span residues 12 to 32 (MIGI…HPGV), 35 to 55 (VIQP…FGGL), and 67 to 87 (VFVV…YVGD).

Belongs to the sbp family.

It localises to the cell membrane. This is an uncharacterized protein from Mycobacterium bovis (strain ATCC BAA-935 / AF2122/97).